We begin with the raw amino-acid sequence, 789 residues long: Mitochondrial inner membrane m-AAA protease component AFG3L1 (789 aa).

Residues M1–Y70 constitute a mitochondrion transit peptide. Residues F81 to F121 are disordered. A compositionally biased stretch (gly residues) spans G106–G115. The next 2 membrane-spanning stretches (helical) occupy residues F139–F158 and F246–M264. Residues V302, A303, T344, G345, K346, T347, L348, and H482 each coordinate ATP. Zn(2+) is bound at residue H566. Residue E567 is part of the active site. 2 residues coordinate Zn(2+): H570 and D641. The interval E749 to V789 is disordered. The segment covering G767–V789 has biased composition (basic and acidic residues).

It in the N-terminal section; belongs to the AAA ATPase family. In the C-terminal section; belongs to the peptidase M41 family. In terms of assembly, homooligomer. Forms heterohexamers with Spg7 and Afg3l1. The m-AAA protease is either composed of homohexamers of Afg3l2 or heterohexamers of Afg3l1, Afg3l2 and/or Spg7. The cofactor is Zn(2+).

Its subcellular location is the mitochondrion inner membrane. The enzyme catalyses ATP + H2O = ADP + phosphate + H(+). In terms of biological role, catalytic component of the m-AAA protease, a protease that plays a key role in proteostasis of inner mitochondrial membrane proteins, and which is essential for axonal and neuron development. Afg3l1 possesses both ATPase and protease activities: the ATPase activity is required to unfold substrates, threading them into the internal proteolytic cavity for hydrolysis into small peptide fragments. The m-AAA protease exerts a dual role in the mitochondrial inner membrane: it mediates the processing of specific regulatory proteins and ensures protein quality control by degrading misfolded polypeptides. Required for SPG7 maturation into its active mature form after SPG7 cleavage by mitochondrial-processing peptidase (MPP). The chain is Mitochondrial inner membrane m-AAA protease component AFG3L1 from Mus musculus (Mouse).